Consider the following 584-residue polypeptide: 2-isopropylmalate synthase (584 aa).

A Pyruvate carboxyltransferase domain is found at Pro40–Glu314. Asp49, His253, His255, and Asn289 together coordinate Mg(2+). The interval Ser456–Asp584 is regulatory domain.

It belongs to the alpha-IPM synthase/homocitrate synthase family. LeuA type 2 subfamily. As to quaternary structure, homodimer. It depends on Mg(2+) as a cofactor.

It localises to the cytoplasm. It carries out the reaction 3-methyl-2-oxobutanoate + acetyl-CoA + H2O = (2S)-2-isopropylmalate + CoA + H(+). It participates in amino-acid biosynthesis; L-leucine biosynthesis; L-leucine from 3-methyl-2-oxobutanoate: step 1/4. Functionally, catalyzes the condensation of the acetyl group of acetyl-CoA with 3-methyl-2-oxobutanoate (2-ketoisovalerate) to form 3-carboxy-3-hydroxy-4-methylpentanoate (2-isopropylmalate). In Kocuria rhizophila (strain ATCC 9341 / DSM 348 / NBRC 103217 / DC2201), this protein is 2-isopropylmalate synthase.